Here is a 343-residue protein sequence, read N- to C-terminus: Probable potassium channel protein 2 (343 aa).

Residues 1 to 7 lie on the Cytoplasmic side of the membrane; sequence METSKKL. The helical transmembrane segment at 8–28 threads the bilayer; the sequence is VIVAVLSITLILTYAYLISII. The Extracellular segment spans residues 29-61; it reads EGVDYFTALYFSVITITTTGYGDFTPKTFLGRT. A Selectivity filter motif is present at residues 46-51; sequence TTGYGD. A helical transmembrane segment spans residues 62–82; sequence LTVVYLCVGVGIVMYLFSLIA. Residues 83 to 343 are Cytoplasmic-facing; that stretch reads EFIVEGKFEE…NLVKKKKKKL (261 aa). The RCK N-terminal domain occupies 107–227; sequence KDHYIICGYG…KIAGANRVVS (121 aa). In terms of domain architecture, RCK C-terminal spans 253-338; the sequence is IKIAKDEYEE…LKYLENLVKK (86 aa).

Its subcellular location is the cell membrane. In terms of biological role, probable potassium channel protein. This Methanocaldococcus jannaschii (strain ATCC 43067 / DSM 2661 / JAL-1 / JCM 10045 / NBRC 100440) (Methanococcus jannaschii) protein is Probable potassium channel protein 2.